The sequence spans 209 residues: Pyrrolidone-carboxylate peptidase (209 aa).

Active-site residues include Glu79, Cys142, and His164.

It belongs to the peptidase C15 family. In terms of assembly, homotetramer.

The protein resides in the cytoplasm. It catalyses the reaction Release of an N-terminal pyroglutamyl group from a polypeptide, the second amino acid generally not being Pro.. In terms of biological role, removes 5-oxoproline from various penultimate amino acid residues except L-proline. The sequence is that of Pyrrolidone-carboxylate peptidase from Saccharolobus islandicus (strain L.S.2.15 / Lassen #1) (Sulfolobus islandicus).